The primary structure comprises 433 residues: 3-phosphoshikimate 1-carboxyvinyltransferase (433 aa).

3-phosphoshikimate is bound by residues lysine 22, serine 23, and arginine 27. Lysine 22 contacts phosphoenolpyruvate. 2 residues coordinate phosphoenolpyruvate: glycine 96 and arginine 129. 3-phosphoshikimate contacts are provided by serine 175, serine 176, glutamine 177, serine 203, aspartate 318, asparagine 341, and lysine 345. Phosphoenolpyruvate is bound at residue glutamine 177. Aspartate 318 functions as the Proton acceptor in the catalytic mechanism. Phosphoenolpyruvate-binding residues include arginine 349, arginine 393, and lysine 418.

Belongs to the EPSP synthase family. In terms of assembly, monomer.

It is found in the cytoplasm. The enzyme catalyses 3-phosphoshikimate + phosphoenolpyruvate = 5-O-(1-carboxyvinyl)-3-phosphoshikimate + phosphate. Its pathway is metabolic intermediate biosynthesis; chorismate biosynthesis; chorismate from D-erythrose 4-phosphate and phosphoenolpyruvate: step 6/7. Its function is as follows. Catalyzes the transfer of the enolpyruvyl moiety of phosphoenolpyruvate (PEP) to the 5-hydroxyl of shikimate-3-phosphate (S3P) to produce enolpyruvyl shikimate-3-phosphate and inorganic phosphate. In Mannheimia succiniciproducens (strain KCTC 0769BP / MBEL55E), this protein is 3-phosphoshikimate 1-carboxyvinyltransferase.